The sequence spans 330 residues: Aspartate--ammonia ligase (330 aa).

This sequence belongs to the class-II aminoacyl-tRNA synthetase family. AsnA subfamily.

Its subcellular location is the cytoplasm. The enzyme catalyses L-aspartate + NH4(+) + ATP = L-asparagine + AMP + diphosphate + H(+). The protein operates within amino-acid biosynthesis; L-asparagine biosynthesis; L-asparagine from L-aspartate (ammonia route): step 1/1. The chain is Aspartate--ammonia ligase from Streptococcus agalactiae serotype III (strain NEM316).